We begin with the raw amino-acid sequence, 352 residues long: Homeobox protein Mohawk (352 aa).

The disordered stretch occupies residues 19–54 (GASERERGGRPYSGVLDSPHARPEVGIPDGPPLKDN). A DNA-binding region (homeobox; TALE-type) is located at residues 71–132 (VRHKRQALQD…NARRRLKNTV (62 aa)). Disordered stretches follow at residues 159 to 189 (VSSD…VHHP) and 245 to 301 (TRQR…PSKD).

The protein belongs to the TALE/IRO homeobox family.

The protein localises to the nucleus. May act as a morphogenetic regulator of cell adhesion. The chain is Homeobox protein Mohawk (MKX) from Homo sapiens (Human).